A 1114-amino-acid polypeptide reads, in one-letter code: Probable guanine nucleotide exchange factor MCF2L2 (1114 aa).

One can recognise a CRAL-TRIO domain in the interval 11 to 193 (PQELTRRLAT…ELGGTLEYRH (183 aa)). The Spectrin repeat unit spans residues 323 to 428 (QHFEHDFCKA…KWDILGKSLE (106 aa)). The tract at residues 530–614 (QTRPVQPVAP…NPELEQQARL (85 aa)) is disordered. Over residues 546–559 (KWVSSKTSQPSTSV) the composition is skewed to polar residues. Over residues 577 to 606 (LNSRGKEDDETKFEVKSEEIFESHHERGNP) the composition is skewed to basic and acidic residues. Residues 619 to 822 (PRRRIIRDLL…EDLIKSCELA (204 aa)) form the DH domain. One can recognise a PH domain in the interval 834–954 (DIGKLGKLLL…WFSEISKLLM (121 aa)). Residues 962–975 (DQGNPQFEMSTSKG) show a composition bias toward polar residues. The tract at residues 962-1114 (DQGNPQFEMS…LRPRTSAQES (153 aa)) is disordered. The segment covering 986-997 (NMERATTSKEDP) has biased composition (basic and acidic residues). Residues 1017-1028 (TFEDCEGAEDME) show a composition bias toward acidic residues. Composition is skewed to basic and acidic residues over residues 1043-1067 (DDSH…GEKE) and 1074-1084 (TATRSTEEERA).

This sequence belongs to the MCF2 family. In terms of tissue distribution, significantly expressed in brain and modestly in pancreas, brain and testis.

Probably functions as a guanine nucleotide exchange factor. This Homo sapiens (Human) protein is Probable guanine nucleotide exchange factor MCF2L2 (MCF2L2).